Consider the following 216-residue polypeptide: V-type ATP synthase subunit D (216 aa).

This sequence belongs to the V-ATPase D subunit family.

Produces ATP from ADP in the presence of a proton gradient across the membrane. The sequence is that of V-type ATP synthase subunit D from Clostridium botulinum (strain ATCC 19397 / Type A).